A 355-amino-acid chain; its full sequence is Heat-inducible transcription repressor HrcA (355 aa).

The protein belongs to the HrcA family.

Functionally, negative regulator of class I heat shock genes (grpE-dnaK-dnaJ and groELS operons). Prevents heat-shock induction of these operons. The protein is Heat-inducible transcription repressor HrcA of Nitratidesulfovibrio vulgaris (strain DSM 19637 / Miyazaki F) (Desulfovibrio vulgaris).